The following is a 577-amino-acid chain: ATP-dependent zinc metalloprotease FtsH (577 aa).

Residues 1–3 lie on the Cytoplasmic side of the membrane; the sequence is MKK. The helical transmembrane segment at 4–24 threads the bilayer; sequence LYWIILIAVVLACSGILMSLH. At 25–98 the chain is on the extracellular side; sequence LSVTKEEMTY…IKVDNSDSYS (74 aa). Residues 99–119 form a helical membrane-spanning segment; the sequence is ATKVIQIILIITVGTGVFLFI. Topologically, residues 120 to 577 are cytoplasmic; the sequence is RTSGGKDKPL…IDRICLKEAV (458 aa). 186–193 provides a ligand contact to ATP; that stretch reads GPPGTGKT. His-409 provides a ligand contact to Zn(2+). Glu-410 is a catalytic residue. Positions 413 and 487 each coordinate Zn(2+).

The protein in the central section; belongs to the AAA ATPase family. In the C-terminal section; belongs to the peptidase M41 family. Homohexamer. Zn(2+) serves as cofactor.

It localises to the cell membrane. Acts as a processive, ATP-dependent zinc metallopeptidase for both cytoplasmic and membrane proteins. Plays a role in the quality control of integral membrane proteins. The chain is ATP-dependent zinc metalloprotease FtsH from Lachnoclostridium phytofermentans (strain ATCC 700394 / DSM 18823 / ISDg) (Clostridium phytofermentans).